Here is a 500-residue protein sequence, read N- to C-terminus: MPPAVGGPVGYTPPDGGWGWAVVIGAFISIGFSYAFPKSITVFFKEIEGIFHATTSEVSWISSIMLAVMYGGGPISSILVNKYGSRIVMIVGGCLSGCGLIAASFCNTVQQLYVCIGVIGGLGLAFNLNPALTMIGKYFYKRRPLANGLAMAGSPVFLCTLAPLNQVFFGIFGWRGSFLILGGLLLNCCVAGALMRPIGPKPTKAGKDKSKASLEKAGKSGVKKDLHDANTDLIGRHPKQEKRSVFQTINQFLDLTLFTHRGFLLYLSGNVIMFFGLFAPLVFLSSYGKSQHYSSEKSAFLLSILAFVDMVARPSMGLVANTKPIRPRIQYFFAASVVANGVCHMLAPLSTTYVGFCVYAGFFGFAFGWLSSVLFETLMDLVGPQRFSSAVGLVTIVECCPVLLGPPLLGRLNDMYGDYKYTYWACGVVLIISGIYLFIGMGINYRLLAKEQKANEQKKESKEEETSIDVAGKPNEVTKAAESPDQKDTDGGPKEEESPV.

Topologically, residues Met-1–Val-22 are cytoplasmic. The helical transmembrane segment at Val-23–Phe-44 threads the bilayer. Lys-38 is a binding site for (S)-lactate. Topologically, residues Lys-45–Thr-55 are extracellular. Residues Ser-56–Val-80 traverse the membrane as a helical segment. Over Asn-81–Gly-84 the chain is Cytoplasmic. Residues Ser-85–Phe-105 form a helical membrane-spanning segment. Over Cys-106–Val-109 the chain is Extracellular. A helical membrane pass occupies residues Gln-110–Leu-132. The Cytoplasmic portion of the chain corresponds to Thr-133–Ala-146. A helical membrane pass occupies residues Asn-147–Phe-169. Over Gly-170–Trp-174 the chain is Extracellular. Residues Arg-175 to Leu-194 traverse the membrane as a helical segment. Residues Met-195–Arg-261 lie on the Cytoplasmic side of the membrane. Phosphoserine is present on residues Ser-210 and Ser-213. Thr-231 is subject to Phosphothreonine. A helical transmembrane segment spans residues Gly-262–Gly-288. The Extracellular segment spans residues Lys-289–Ser-295. The chain crosses the membrane as a helical span at residues Glu-296–Gly-317. Residue Asp-309 participates in H(+) binding. Arg-313 lines the (S)-lactate pocket. At Leu-318 to Arg-328 the chain is on the cytoplasmic side. A helical membrane pass occupies residues Ile-329–Leu-349. The Extracellular portion of the chain corresponds to Ser-350–Tyr-353. Residues Val-354–Phe-375 form a helical membrane-spanning segment. Topologically, residues Glu-376–Ser-389 are cytoplasmic. A helical membrane pass occupies residues Ala-390–Gly-410. At Arg-411–Tyr-421 the chain is on the extracellular side. A helical transmembrane segment spans residues Thr-422–Ile-443. The Cytoplasmic segment spans residues Asn-444–Val-500. Over residues Ala-454 to Glu-465 the composition is skewed to basic and acidic residues. Positions Ala-454–Val-500 are disordered. Ser-461 is subject to Phosphoserine. Thr-466 bears the Phosphothreonine mark. Ser-467, Ser-483, and Ser-498 each carry phosphoserine. Over residues Glu-482 to Val-500 the composition is skewed to basic and acidic residues.

Belongs to the major facilitator superfamily. Monocarboxylate porter (TC 2.A.1.13) family. In terms of assembly, interacts with EMB; interaction mediates SLC16A1 targeting to the plasma membrane. Interacts with isoform 2 of BSG; interaction mediates SLC16A1 targeting to the plasma membrane. Widely expressed. Detected in heart and in blood lymphocytes and monocytes (at protein level).

Its subcellular location is the cell membrane. It is found in the basolateral cell membrane. It localises to the apical cell membrane. The enzyme catalyses (S)-lactate(in) + H(+)(in) = (S)-lactate(out) + H(+)(out). The catalysed reaction is acetate(out) + H(+)(out) = acetate(in) + H(+)(in). It carries out the reaction acetoacetate(out) + H(+)(out) = acetoacetate(in) + H(+)(in). It catalyses the reaction pyruvate(out) + H(+)(out) = pyruvate(in) + H(+)(in). The enzyme catalyses (R)-3-hydroxybutanoate(out) + H(+)(out) = (R)-3-hydroxybutanoate(in) + H(+)(in). The catalysed reaction is 3-methyl-2-oxobutanoate(out) + H(+)(out) = 3-methyl-2-oxobutanoate(in) + H(+)(in). It carries out the reaction 4-methyl-2-oxopentanoate(out) + H(+)(out) = 4-methyl-2-oxopentanoate(in) + H(+)(in). It catalyses the reaction succinate(in) + 2 H(+)(in) = succinate(out) + 2 H(+)(out). With respect to regulation, selectively inhibited by AZD3965, that acts as a competitive inhibitor binding to the central channel in the outward open conformation. In terms of biological role, bidirectional proton-coupled monocarboxylate transporter. Catalyzes the rapid transport across the plasma membrane of many monocarboxylates such as lactate, pyruvate, acetate and the ketone bodies acetoacetate and beta-hydroxybutyrate, and thus contributes to the maintenance of intracellular pH. The transport direction is determined by the proton motive force and the concentration gradient of the substrate monocarboxylate. MCT1 is a major lactate exporter. Plays a role in cellular responses to a high-fat diet by modulating the cellular levels of lactate and pyruvate that contribute to the regulation of central metabolic pathways and insulin secretion, with concomitant effects on plasma insulin levels and blood glucose homeostasis. Facilitates the protonated monocarboxylate form of succinate export, that its transient protonation upon muscle cell acidification in exercising muscle and ischemic heart. Functions via alternate outward- and inward-open conformation states. Protonation and deprotonation of 309-Asp is essential for the conformational transition. The sequence is that of Monocarboxylate transporter 1 from Homo sapiens (Human).